A 330-amino-acid chain; its full sequence is Beta-1,6-galactofuranosyltransferase WbbI (330 aa).

It localises to the cytoplasm. It functions in the pathway bacterial outer membrane biogenesis; lipopolysaccharide biosynthesis. In terms of biological role, involved in the transfer of galactofuranose (Galf) onto an alpha-D-gluco-configured acceptor substrate to form a beta-1,6-linkage. It uses n-octyl alpha-D-glucopyranoside as an acceptor substrate for the addition of galactofuranose from the donor substrate UDP-galactofuranose. It is not able to use beta-D-glucopyranoside isomers. This is Beta-1,6-galactofuranosyltransferase WbbI (wbbI) from Escherichia coli (strain K12).